The chain runs to 213 residues: Orotate phosphoribosyltransferase (213 aa).

Lys-26 provides a ligand contact to 5-phospho-alpha-D-ribose 1-diphosphate. 34–35 (FF) provides a ligand contact to orotate. 5-phospho-alpha-D-ribose 1-diphosphate-binding positions include 72-73 (YK), Arg-99, Lys-100, Lys-103, His-105, and 124-132 (DDVITAGTA). Orotate-binding residues include Thr-128 and Arg-156.

Belongs to the purine/pyrimidine phosphoribosyltransferase family. PyrE subfamily. Homodimer. Requires Mg(2+) as cofactor.

It carries out the reaction orotidine 5'-phosphate + diphosphate = orotate + 5-phospho-alpha-D-ribose 1-diphosphate. Its pathway is pyrimidine metabolism; UMP biosynthesis via de novo pathway; UMP from orotate: step 1/2. Catalyzes the transfer of a ribosyl phosphate group from 5-phosphoribose 1-diphosphate to orotate, leading to the formation of orotidine monophosphate (OMP). This Haemophilus ducreyi (strain 35000HP / ATCC 700724) protein is Orotate phosphoribosyltransferase.